A 407-amino-acid polypeptide reads, in one-letter code: FK506-binding protein 3 (407 aa).

Disordered stretches follow at residues 46-136 (RIEG…DDEG), 191-223 (DEDELLALGEDDEDDEDELDEGEYDLSPDEDEV), and 236-297 (QDDE…PKLV). 2 stretches are compositionally biased toward acidic residues: residues 65–88 (NFDDEDDEDDEDEDDDDEDDEVSA) and 103–136 (DGLDEVEGGDDDEDDDEDDEMEFEEDDEDDDDEG). Residues 236–252 (QDDEDDEDDEDEEEEPV) show a composition bias toward acidic residues. Positions 253–272 (VEPKKILKRAAEEKKQEKAA) are enriched in basic and acidic residues. One can recognise a PPIase FKBP-type domain in the interval 321–407 (GSKVGVRYVG…TFDVKVVNIK (87 aa)).

The protein belongs to the FKBP-type PPIase family. FKBP3/4 subfamily.

Its subcellular location is the nucleus. It localises to the nucleolus. The catalysed reaction is [protein]-peptidylproline (omega=180) = [protein]-peptidylproline (omega=0). Its activity is regulated as follows. Inhibited by both FK506 and rapamycin. Functionally, PPIases accelerate the folding of proteins. It catalyzes the cis-trans isomerization of proline imidic peptide bonds in oligopeptides. In Yarrowia lipolytica (strain CLIB 122 / E 150) (Yeast), this protein is FK506-binding protein 3 (FPR3).